A 245-amino-acid chain; its full sequence is Ribonuclease 3 (245 aa).

The RNase III domain maps to 18–146; sequence LSEFLENLSI…FVGAIYLDSG (129 aa). Glu59 lines the Mg(2+) pocket. Asp63 is a catalytic residue. Residues Asp132 and Glu135 each contribute to the Mg(2+) site. The active site involves Glu135. Residues 173–242 enclose the DRBM domain; sequence DYKSLLQEYV…AEVALKAMED (70 aa).

It belongs to the ribonuclease III family. In terms of assembly, homodimer. Mg(2+) serves as cofactor.

Its subcellular location is the cytoplasm. The catalysed reaction is Endonucleolytic cleavage to 5'-phosphomonoester.. Its function is as follows. Digests double-stranded RNA. Involved in the processing of primary rRNA transcript to yield the immediate precursors to the large and small rRNAs (23S and 16S). Processes some mRNAs, and tRNAs when they are encoded in the rRNA operon. Processes pre-crRNA and tracrRNA of type II CRISPR loci if present in the organism. The sequence is that of Ribonuclease 3 from Borreliella afzelii (strain PKo) (Borrelia afzelii).